The chain runs to 264 residues: 3-methyl-2-oxobutanoate hydroxymethyltransferase (264 aa).

Asp45 and Asp84 together coordinate Mg(2+). 3-methyl-2-oxobutanoate contacts are provided by residues Asp45 to Ser46, Asp84, and Lys112. Glu114 provides a ligand contact to Mg(2+). The Proton acceptor role is filled by Glu181.

This sequence belongs to the PanB family. As to quaternary structure, homodecamer; pentamer of dimers. Requires Mg(2+) as cofactor.

Its subcellular location is the cytoplasm. The enzyme catalyses 3-methyl-2-oxobutanoate + (6R)-5,10-methylene-5,6,7,8-tetrahydrofolate + H2O = 2-dehydropantoate + (6S)-5,6,7,8-tetrahydrofolate. The protein operates within cofactor biosynthesis; (R)-pantothenate biosynthesis; (R)-pantoate from 3-methyl-2-oxobutanoate: step 1/2. Functionally, catalyzes the reversible reaction in which hydroxymethyl group from 5,10-methylenetetrahydrofolate is transferred onto alpha-ketoisovalerate to form ketopantoate. The sequence is that of 3-methyl-2-oxobutanoate hydroxymethyltransferase from Cronobacter sakazakii (strain ATCC BAA-894) (Enterobacter sakazakii).